Consider the following 280-residue polypeptide: Tumor necrosis factor ligand superfamily member 6 (280 aa).

Over 1-80 (MQQPLNYPYP…KTRRDHNTGL (80 aa)) the chain is Cytoplasmic. The tract at residues 20-71 (SSPWGPPGSVLPCPSSVPGRPGQRRPPPPPPPTLPPPPPPPPLPPLPLPPLK) is disordered. The span at 43–69 (RRPPPPPPPTLPPPPPPPPLPPLPLPP) shows a compositional bias: pro residues. Residues 81–101 (CLLVMFFMVLVALVGLGLGMF) traverse the membrane as a helical; Signal-anchor for type II membrane protein segment. Residues 102-280 (QLFHLQKELA…SKTFFGLYKL (179 aa)) lie on the Extracellular side of the membrane. A THD domain is found at 144 to 280 (KVAHLTGKPN…SKTFFGLYKL (137 aa)). A glycan (N-linked (GlcNAc...) asparagine) is linked at N183. C201 and C232 are disulfide-bonded. Residues N249 and N259 are each glycosylated (N-linked (GlcNAc...) asparagine).

It belongs to the tumor necrosis factor family. In terms of assembly, homotrimer. Interacts with ARHGAP9, BAIAP2L1, BTK, CACNB3, CACNB4, CRK, DLG2, DNMBP, DOCK4, EPS8L3, FGR, FYB1, FYN, HCK, ITK, ITSN2, KALRN, LYN, MACC1, MIA, MPP4, MYO15A, NCF1, NCK1, NCK2, NCKIPSD, OSTF1, PIK3R1, PSTPIP1, RIMBP3C, SAMSN1, SH3GL3, SH3PXD2B, SH3PXD2A, SH3RF2, SKAP2, SNX33, SNX9, SORBS3, SPTA1, SRC, SRGAP1, SRGAP2, SRGAP3, TEC, TJP3 and YES1. In terms of processing, the soluble form derives from the membrane form by proteolytic processing. The membrane-bound form undergoes two successive intramembrane proteolytic cleavages. The first one is processed by ADAM10 producing an N-terminal fragment, which lacks the receptor-binding extracellular domain. This ADAM10-processed FasL (FasL APL) remnant form is still membrane anchored and further processed by SPPL2A that liberates the FasL intracellular domain (FasL ICD). FasL shedding by ADAM10 is a prerequisite for subsequent intramembrane cleavage by SPPL2A in T-cells. Phosphorylated by FGR on tyrosine residues; this is required for ubiquitination and subsequent internalization. Post-translationally, N-glycosylated. Glycosylation enhances apoptotic activity. In terms of processing, monoubiquitinated.

It localises to the cell membrane. The protein localises to the cytoplasmic vesicle lumen. It is found in the lysosome lumen. Its subcellular location is the secreted. The protein resides in the nucleus. In terms of biological role, cytokine that binds to TNFRSF6/FAS, a receptor that transduces the apoptotic signal into cells. Involved in cytotoxic T-cell-mediated apoptosis, natural killer cell-mediated apoptosis and in T-cell development. Initiates fratricidal/suicidal activation-induced cell death (AICD) in antigen-activated T-cells contributing to the termination of immune responses. TNFRSF6/FAS-mediated apoptosis has also a role in the induction of peripheral tolerance. Binds to TNFRSF6B/DcR3, a decoy receptor that blocks apoptosis. Its function is as follows. Induces FAS-mediated activation of NF-kappa-B, initiating non-apoptotic signaling pathways. Can induce apoptosis but does not appear to be essential for this process. Cytoplasmic form induces gene transcription inhibition. This is Tumor necrosis factor ligand superfamily member 6 (FASLG) from Felis catus (Cat).